A 288-amino-acid polypeptide reads, in one-letter code: Galactose/N-acetyl-D-galactosamine lectin light subunit 1 (288 aa).

Residues 1 to 15 form the signal peptide; the sequence is MIILVLLISYSFGKT. 2 N-linked (GlcNAc...) asparagine glycosylation sites follow: asparagine 205 and asparagine 261.

As to quaternary structure, heterodimer composed of a 170 kDa heavy subunit (hgl) and a 31/35 kDa light subunit (lgl); disulfide-linked.

The protein resides in the cell membrane. Its function is as follows. Light subunit of a heterodimeric lectin; the heavy subunit binds galactose and N-acetyl-D-galactosamine of host glycoproteins and thus mediates adhesion to host cells. The protein is Galactose/N-acetyl-D-galactosamine lectin light subunit 1 of Entamoeba histolytica (strain ATCC 30459 / HM-1:IMSS / ABRM).